A 942-amino-acid chain; its full sequence is Isoleucine--tRNA ligase (942 aa).

The short motif at proline 58 to histidine 68 is the 'HIGH' region element. Glutamate 567 contacts L-isoleucyl-5'-AMP. The 'KMSKS' region signature appears at lysine 608 to serine 612. Residue lysine 611 participates in ATP binding. Residues cysteine 905, cysteine 908, cysteine 925, and cysteine 928 each coordinate Zn(2+).

This sequence belongs to the class-I aminoacyl-tRNA synthetase family. IleS type 1 subfamily. In terms of assembly, monomer. Zn(2+) is required as a cofactor.

Its subcellular location is the cytoplasm. The enzyme catalyses tRNA(Ile) + L-isoleucine + ATP = L-isoleucyl-tRNA(Ile) + AMP + diphosphate. In terms of biological role, catalyzes the attachment of isoleucine to tRNA(Ile). As IleRS can inadvertently accommodate and process structurally similar amino acids such as valine, to avoid such errors it has two additional distinct tRNA(Ile)-dependent editing activities. One activity is designated as 'pretransfer' editing and involves the hydrolysis of activated Val-AMP. The other activity is designated 'posttransfer' editing and involves deacylation of mischarged Val-tRNA(Ile). This chain is Isoleucine--tRNA ligase, found in Pseudoalteromonas translucida (strain TAC 125).